The following is a 168-amino-acid chain: Xanthine-guanine phosphoribosyltransferase (168 aa).

Residues 43–44 and 102–110 contribute to the 5-phospho-alpha-D-ribose 1-diphosphate site; these read RG and DDLVDTGAT. Aspartate 103 serves as a coordination point for Mg(2+). Residues aspartate 106 and isoleucine 149 each contribute to the guanine site. 2 residues coordinate xanthine: aspartate 106 and isoleucine 149. GMP is bound by residues 106-110 and 148-149; these read DTGAT and WI.

This sequence belongs to the purine/pyrimidine phosphoribosyltransferase family. XGPT subfamily. As to quaternary structure, homotetramer. It depends on Mg(2+) as a cofactor.

Its subcellular location is the cell inner membrane. The catalysed reaction is GMP + diphosphate = guanine + 5-phospho-alpha-D-ribose 1-diphosphate. It carries out the reaction XMP + diphosphate = xanthine + 5-phospho-alpha-D-ribose 1-diphosphate. It catalyses the reaction IMP + diphosphate = hypoxanthine + 5-phospho-alpha-D-ribose 1-diphosphate. Its pathway is purine metabolism; GMP biosynthesis via salvage pathway; GMP from guanine: step 1/1. It functions in the pathway purine metabolism; XMP biosynthesis via salvage pathway; XMP from xanthine: step 1/1. Its function is as follows. Purine salvage pathway enzyme that catalyzes the transfer of the ribosyl-5-phosphate group from 5-phospho-alpha-D-ribose 1-diphosphate (PRPP) to the N9 position of the 6-oxopurines guanine and xanthine to form the corresponding ribonucleotides GMP (guanosine 5'-monophosphate) and XMP (xanthosine 5'-monophosphate), with the release of PPi. To a lesser extent, also acts on hypoxanthine. This Nitrobacter winogradskyi (strain ATCC 25391 / DSM 10237 / CIP 104748 / NCIMB 11846 / Nb-255) protein is Xanthine-guanine phosphoribosyltransferase.